Here is a 252-residue protein sequence, read N- to C-terminus: Phosphate import ATP-binding protein PstB (252 aa).

In terms of domain architecture, ABC transporter spans 6 to 247 (MSIRDLNFYY…PAQKATEDYI (242 aa)). 38–45 (GPSGCGKS) is an ATP binding site.

It belongs to the ABC transporter superfamily. Phosphate importer (TC 3.A.1.7) family. In terms of assembly, the complex is composed of two ATP-binding proteins (PstB), two transmembrane proteins (PstC and PstA) and a solute-binding protein (PstS).

The protein localises to the cell inner membrane. It catalyses the reaction phosphate(out) + ATP + H2O = ADP + 2 phosphate(in) + H(+). Functionally, part of the ABC transporter complex PstSACB involved in phosphate import. Responsible for energy coupling to the transport system. This is Phosphate import ATP-binding protein PstB from Psychrobacter cryohalolentis (strain ATCC BAA-1226 / DSM 17306 / VKM B-2378 / K5).